The primary structure comprises 145 residues: Ribonuclease H (145 aa).

Residues 1–142 (MDTPVYLYTD…ADDLANRGAA (142 aa)) enclose the RNase H type-1 domain. The Mg(2+) site is built by D10, E48, D70, and D134.

It belongs to the RNase H family. In terms of assembly, monomer. It depends on Mg(2+) as a cofactor.

Its subcellular location is the cytoplasm. The catalysed reaction is Endonucleolytic cleavage to 5'-phosphomonoester.. Its function is as follows. Endonuclease that specifically degrades the RNA of RNA-DNA hybrids. The protein is Ribonuclease H of Neisseria meningitidis serogroup C / serotype 2a (strain ATCC 700532 / DSM 15464 / FAM18).